A 213-amino-acid chain; its full sequence is MDEFKQLDLKKREIENRLNELEGVLLKERVTMDTPLLTEDGFPRSDIDVPSIRTARHEIITLRNDHRELEDQIKKVLEKVFSGFSKESLAANDETKLAQEADPLNFNAANYNMNDIISRSKILGRVKPFCVVDSVAVESPAQEAGLCIGDELVHVQNVTSLSELPTFISNNVNKTLDVLLIRGYSADGSTNLVELKLTPHKWQGPGLLGCHLR.

The stretch at Met-1 to Ser-82 forms a coiled coil. In terms of domain architecture, PDZ spans Ser-120–Tyr-184.

It localises to the cytoplasm. Its subcellular location is the nucleus. Its function is as follows. Acts as a chaperone during the assembly of the 26S proteasome, specifically of the base subcomplex of the 19S regulatory complex (RC). This is Probable 26S proteasome regulatory subunit p27 (nas2) from Schizosaccharomyces pombe (strain 972 / ATCC 24843) (Fission yeast).